Reading from the N-terminus, the 1095-residue chain is Solute carrier family 12 member 1 (1095 aa).

Over 1-173 the chain is Cytoplasmic; it reads MSVSIPSNSV…EEDMTGVVKF (173 aa). The RFXV motif motif lies at 16–19; the sequence is RFQV. The tract at residues 29–49 is disordered; it reads AAAVGDSADPPHYEETSFGDE. Residues S57 and S87 each carry the phosphoserine modification. Residues T91, T96, T101, and T114 each carry the phosphothreonine modification. At S116 the chain carries Phosphoserine. Position 126 is a phosphoserine; by AMPK (S126). Position 144 is a phosphoserine (S144). A helical membrane pass occupies residues 174-194; that stretch reads GWVKGVLVRCMLNIWGVMLFI. At 195 to 197 the chain is on the extracellular side; it reads RLS. Residues 198–218 form a helical membrane-spanning segment; it reads WIVGEAGIGLGVLIILLSTMV. Residues 219–255 lie on the Cytoplasmic side of the membrane; sequence TSITGLSTSAIATNGFVRGGGAYYLISRSLGPEFGGS. A helical transmembrane segment spans residues 256 to 276; the sequence is IGLIFAFANAVAVAMYVVGFA. Residues 277–298 lie on the Extracellular side of the membrane; sequence ETVVDLLKESDSMMVDPTNDIR. A helical transmembrane segment spans residues 299–319; that stretch reads IIGSITVVILLGISVAGMEWE. The Cytoplasmic portion of the chain corresponds to 320 to 323; the sequence is AKAQ. A helical membrane pass occupies residues 324-344; sequence VILLVILLIAIANFFIGTVIP. The Extracellular portion of the chain corresponds to 345–375; the sequence is SNNEKKSRGFFNYQASIFAENFGPSFTKGEG. The chain crosses the membrane as a helical span at residues 376 to 396; sequence FFSVFAIFFPAATGILAGANI. Residues 397-413 are Cytoplasmic-facing; that stretch reads SGDLEDPQDAIPRGTML. The helical transmembrane segment at 414-434 threads the bilayer; the sequence is AIFITTVAYIGVAICVAACVV. Over 435-546 the chain is Extracellular; the sequence is RDATGSMNDT…NNEPLRGYFL (112 aa). 2 N-linked (GlcNAc...) asparagine glycosylation sites follow: N442 and N452. 2 helical membrane passes run 547–567 and 568–588; these read TFVI…APII and SNFF…ASYA. Topologically, residues 589 to 605 are extracellular; the sequence is KSPGWRPAYGIYNMWVS. Residues 606 to 626 traverse the membrane as a helical segment; it reads LFGAILCCAVMFVINWWAAVI. Residues 627–1095 are Cytoplasmic-facing; sequence TYVIELFLYI…NHKNVLTFYS (469 aa).

This sequence belongs to the SLC12A transporter family. As to quaternary structure, when phosphorylated, interacts with PPP3CB. Post-translationally, phosphorylated at Ser-87, Thr-96 and Thr-101 by OXSR1/OSR1 and STK39/SPAK downstream of WNK kinases (WNK1, WNK2, WNK3 or WNK4), promoting its activity. Short-term cyclosporine administration increases SLC12A1 phosphorylation in kidney thick ascending limb, possibly through the inhibition of PPP3CB/calcineurin A beta phosphatase. Predominantly expressed in kidney (at protein level). In terms of tissue distribution, kidney-specific; most highly expressed in the outer stripe of outer medulla (at protein level). As to expression, kidney-specific; most highly expressed in the cortical thick ascending limb (at protein level). Kidney-specific; most highly expressed in the inner stripe of outer medulla (at protein level).

The protein localises to the apical cell membrane. The catalysed reaction is K(+)(out) + 2 chloride(out) + Na(+)(out) = K(+)(in) + 2 chloride(in) + Na(+)(in). With respect to regulation, activated following phosphorylation by OXSR1/OSR1 and STK39/SPAK downstream of WNK kinases (WNK1, WNK2, WNK3 or WNK4). Inhibited by mercury dichloride and diuretic drug bumetaide. Inactive in isotonic conditions. In terms of biological role, renal sodium, potassium and chloride ion cotransporter that mediates the transepithelial NaCl reabsorption in the thick ascending limb and plays an essential role in the urinary concentration and volume regulation. Electrically silent transporter system. High affinity, high capacity cotransporter for sodium, potassium and chloride ions, with a coupling ratio 1Na(+):1K(+):2Cl(-). Functionally, high affinity, low capacity cotransporter for sodium, potassium and chloride ions, with a coupling ratio 1Na(+):1K(+):2Cl(-). Its function is as follows. Low affinity, low capacity cotransporter for sodium, potassium and chloride ions, with a coupling ratio 1Na(+):1K(+):2Cl(-). This chain is Solute carrier family 12 member 1 (Slc12a1), found in Mus musculus (Mouse).